We begin with the raw amino-acid sequence, 68 residues long: MEC1-mediated checkpoint protein HUG1 (68 aa).

It localises to the cytoplasm. Its subcellular location is the nucleus. Functionally, involved in the MEC1-mediated checkpoint response to DNA damage and replication arrest. The sequence is that of MEC1-mediated checkpoint protein HUG1 (HUG1) from Saccharomyces cerevisiae (strain ATCC 204508 / S288c) (Baker's yeast).